The sequence spans 316 residues: Taste receptor type 2 member 3 (316 aa).

The Extracellular portion of the chain corresponds to 1 to 7 (MLGFTEG). The chain crosses the membrane as a helical span at residues 8–28 (IFLVLTVTEFILGNLVNGFIV). Residues 29–50 (SVNGSHWFKSKKISLSDFIITS) are Cytoplasmic-facing. A helical membrane pass occupies residues 51-71 (LALFRIFLLWIIFTDSLIIVF). Topologically, residues 72–86 (SYHTHDSGIRMQLID) are extracellular. Residues 87 to 107 (VFWTFTNHFSIWLISCLSVFY) traverse the membrane as a helical segment. At 108 to 128 (CLKIATFSHPSFLWLKWRASR) the chain is on the cytoplasmic side. The chain crosses the membrane as a helical span at residues 129–149 (VVVGMLWGALVLSCVCTMSLM). Over 150 to 186 (NEFKIYSALTGSRDTQNMTEYIRLKRHEYNLMHVLGN) the chain is Extracellular. The N-linked (GlcNAc...) asparagine glycan is linked to Asn-166. A helical membrane pass occupies residues 187 to 207 (LWKIPSLIVSLIAYFLLLLSL). Residues 208-234 (GKHTQQMQKYSVGSRDQSAEAHRRAMR) lie on the Cytoplasmic side of the membrane. A helical transmembrane segment spans residues 235–255 (IILSFLLFFLFYFLSFVILSS). The Extracellular portion of the chain corresponds to 256 to 266 (SRFLPETKIAR). The helical transmembrane segment at 267–287 (IIGVVITMSYLVGDSLILILG) threads the bilayer. The Cytoplasmic portion of the chain corresponds to 288–316 (NNKLKQTFVAILPCECGHPKPGSKRFFAS).

The protein belongs to the G-protein coupled receptor T2R family.

The protein resides in the membrane. Functionally, gustducin-coupled receptor implicated in the perception of bitter compounds in the oral cavity and the gastrointestinal tract. Signals through PLCB2 and the calcium-regulated cation channel TRPM5. The sequence is that of Taste receptor type 2 member 3 from Rattus norvegicus (Rat).